Reading from the N-terminus, the 553-residue chain is Replication factor C large subunit (553 aa).

50 to 57 (GGPGVGKT) is a binding site for ATP. A disordered region spans residues 438 to 553 (GKRPGKPEAG…SKKQRTLFDF (116 aa)). Residues 442-451 (GKPEAGEPRE) show a composition bias toward basic and acidic residues. Residues 503 to 513 (EAPMAAAMPAA) are compositionally biased toward low complexity. The span at 532–553 (EPEKPPAAEDKCSKKQRTLFDF) shows a compositional bias: basic and acidic residues.

It belongs to the activator 1 small subunits family. RfcL subfamily. In terms of assembly, heteromultimer composed of small subunits (RfcS) and large subunits (RfcL).

Part of the RFC clamp loader complex which loads the PCNA sliding clamp onto DNA. This chain is Replication factor C large subunit, found in Methanocella arvoryzae (strain DSM 22066 / NBRC 105507 / MRE50).